Consider the following 397-residue polypeptide: DNA-directed RNA polymerase subunit Rpo1C (397 aa).

The protein belongs to the RNA polymerase beta' chain family. In terms of assembly, part of the RNA polymerase complex.

It localises to the cytoplasm. The enzyme catalyses RNA(n) + a ribonucleoside 5'-triphosphate = RNA(n+1) + diphosphate. Its function is as follows. DNA-dependent RNA polymerase (RNAP) catalyzes the transcription of DNA into RNA using the four ribonucleoside triphosphates as substrates. Forms part of the jaw domain. This Pyrococcus horikoshii (strain ATCC 700860 / DSM 12428 / JCM 9974 / NBRC 100139 / OT-3) protein is DNA-directed RNA polymerase subunit Rpo1C.